We begin with the raw amino-acid sequence, 881 residues long: Nitrate reductase [NADH] 1 (881 aa).

Positions 1 to 46 (MAASVEHRPFTSHQHGVVRSFKSYPDVPRPKKLPLPQPLSDSTNDN) are disordered. Residue cysteine 167 coordinates Mo-molybdopterin. Positions 515 to 590 (TKSYSLSEVR…LEDYRIGELM (76 aa)) constitute a Cytochrome b5 heme-binding domain. Residues histidine 550 and histidine 573 each contribute to the heme site. One can recognise an FAD-binding FR-type domain in the interval 625-737 (REKIPCKLLS…KGPLGHIEYT (113 aa)). Residues 677–680 (RAYT), 694–698 (VVKVY), phenylalanine 699, phenylalanine 706, 711–713 (IMS), and threonine 764 contribute to the FAD site.

Belongs to the nitrate reductase family. As to quaternary structure, homodimer. FAD serves as cofactor. Heme is required as a cofactor. Requires Mo-molybdopterin as cofactor.

The catalysed reaction is nitrite + NAD(+) + H2O = nitrate + NADH + H(+). In terms of biological role, nitrate reductase is a key enzyme involved in the first step of nitrate assimilation in plants, fungi and bacteria. The protein is Nitrate reductase [NADH] 1 (NIA1) of Phaseolus vulgaris (Kidney bean).